The primary structure comprises 743 residues: Phosphoribosylformylglycinamidine synthase subunit PurL (743 aa).

His-50 is an active-site residue. Residues Tyr-53 and Lys-92 each contribute to the ATP site. Glu-94 serves as a coordination point for Mg(2+). Substrate is bound by residues 95–98 (SHNH) and Arg-117. The active-site Proton acceptor is the His-96. Asp-118 provides a ligand contact to Mg(2+). Position 241 (Gln-241) interacts with substrate. Asp-269 provides a ligand contact to Mg(2+). 313 to 315 (ESQ) is a binding site for substrate. Residues Asp-494 and Gly-531 each contribute to the ATP site. Residue Asn-532 coordinates Mg(2+). Ser-534 is a substrate binding site.

It belongs to the FGAMS family. Monomer. Part of the FGAM synthase complex composed of 1 PurL, 1 PurQ and 2 PurS subunits.

The protein resides in the cytoplasm. The catalysed reaction is N(2)-formyl-N(1)-(5-phospho-beta-D-ribosyl)glycinamide + L-glutamine + ATP + H2O = 2-formamido-N(1)-(5-O-phospho-beta-D-ribosyl)acetamidine + L-glutamate + ADP + phosphate + H(+). It functions in the pathway purine metabolism; IMP biosynthesis via de novo pathway; 5-amino-1-(5-phospho-D-ribosyl)imidazole from N(2)-formyl-N(1)-(5-phospho-D-ribosyl)glycinamide: step 1/2. In terms of biological role, part of the phosphoribosylformylglycinamidine synthase complex involved in the purines biosynthetic pathway. Catalyzes the ATP-dependent conversion of formylglycinamide ribonucleotide (FGAR) and glutamine to yield formylglycinamidine ribonucleotide (FGAM) and glutamate. The FGAM synthase complex is composed of three subunits. PurQ produces an ammonia molecule by converting glutamine to glutamate. PurL transfers the ammonia molecule to FGAR to form FGAM in an ATP-dependent manner. PurS interacts with PurQ and PurL and is thought to assist in the transfer of the ammonia molecule from PurQ to PurL. This Rhizobium meliloti (strain 1021) (Ensifer meliloti) protein is Phosphoribosylformylglycinamidine synthase subunit PurL.